Reading from the N-terminus, the 167-residue chain is Protein-lysine myristoyltransferase RtxC (167 aa).

Catalysis depends on residues H20 and D89.

The protein belongs to the RTX toxin acyltransferase family.

Its subcellular location is the cytoplasm. It catalyses the reaction tetradecanoyl-[ACP] + L-lysyl-[protein] = N(6)-tetradecanoyl-L-lysyl-[protein] + holo-[ACP] + H(+). Protein-lysine myristoyltransferase that catalyzes myristoylation of the protoxin (RtxA) at two internal lysine residues, thereby converting it to the active toxin. This is Protein-lysine myristoyltransferase RtxC from Kingella kingae.